A 289-amino-acid chain; its full sequence is Phosphatidylserine decarboxylase proenzyme (289 aa).

Residues Asp-89, His-146, and Ser-252 each act as charge relay system; for autoendoproteolytic cleavage activity in the active site. Residue Ser-252 is the Schiff-base intermediate with substrate; via pyruvic acid; for decarboxylase activity of the active site. A Pyruvic acid (Ser); by autocatalysis modification is found at Ser-252.

This sequence belongs to the phosphatidylserine decarboxylase family. PSD-B subfamily. Prokaryotic type I sub-subfamily. In terms of assembly, heterodimer of a large membrane-associated beta subunit and a small pyruvoyl-containing alpha subunit. It depends on pyruvate as a cofactor. Is synthesized initially as an inactive proenzyme. Formation of the active enzyme involves a self-maturation process in which the active site pyruvoyl group is generated from an internal serine residue via an autocatalytic post-translational modification. Two non-identical subunits are generated from the proenzyme in this reaction, and the pyruvate is formed at the N-terminus of the alpha chain, which is derived from the carboxyl end of the proenzyme. The autoendoproteolytic cleavage occurs by a canonical serine protease mechanism, in which the side chain hydroxyl group of the serine supplies its oxygen atom to form the C-terminus of the beta chain, while the remainder of the serine residue undergoes an oxidative deamination to produce ammonia and the pyruvoyl prosthetic group on the alpha chain. During this reaction, the Ser that is part of the protease active site of the proenzyme becomes the pyruvoyl prosthetic group, which constitutes an essential element of the active site of the mature decarboxylase.

The protein resides in the cell membrane. The catalysed reaction is a 1,2-diacyl-sn-glycero-3-phospho-L-serine + H(+) = a 1,2-diacyl-sn-glycero-3-phosphoethanolamine + CO2. It functions in the pathway phospholipid metabolism; phosphatidylethanolamine biosynthesis; phosphatidylethanolamine from CDP-diacylglycerol: step 2/2. In terms of biological role, catalyzes the formation of phosphatidylethanolamine (PtdEtn) from phosphatidylserine (PtdSer). The chain is Phosphatidylserine decarboxylase proenzyme from Nitrosospira multiformis (strain ATCC 25196 / NCIMB 11849 / C 71).